The sequence spans 205 residues: LexA repressor (205 aa).

Positions 28–48 (IRDIMKHFNFKSPRAAHKHLI) form a DNA-binding region, H-T-H motif. Residues Ser-125 and Lys-163 each act as for autocatalytic cleavage activity in the active site.

This sequence belongs to the peptidase S24 family. Homodimer.

It catalyses the reaction Hydrolysis of Ala-|-Gly bond in repressor LexA.. Represses a number of genes involved in the response to DNA damage (SOS response), including recA and lexA. In the presence of single-stranded DNA, RecA interacts with LexA causing an autocatalytic cleavage which disrupts the DNA-binding part of LexA, leading to derepression of the SOS regulon and eventually DNA repair. The polypeptide is LexA repressor (Petrotoga mobilis (strain DSM 10674 / SJ95)).